The primary structure comprises 70 residues: uncharacterized protein (70 aa).

The next 2 membrane-spanning stretches (helical) occupy residues valine 19–leucine 39 and leucine 40–phenylalanine 60.

The protein localises to the cell membrane. This is an uncharacterized protein from Streptomyces coelicolor (strain ATCC BAA-471 / A3(2) / M145).